The primary structure comprises 327 residues: Chlorophenol reductase (327 aa).

An N-terminal signal peptide occupies residues 1-24; that stretch reads MKKTLGIILSISLAFSVLALPIFA. The region spanning 65-110 is the LysM domain; sequence TYYTVVSGDFFWQIAAKHGLTIDALAKLNPQIKNVNLIFPGQKILV.

Cob(I)alamin is required as a cofactor.

Its subcellular location is the secreted. The protein resides in the cell wall. The protein localises to the cell membrane. Inhibited by sulfide and to a lesser extent by nitrite. Functionally, reductive dechlorination of ortho-chlorophenols. Dechlorinates in the ortho position with respect to the hydroxyl group. This chain is Chlorophenol reductase, found in Desulfitobacterium hafniense (Desulfitobacterium frappieri).